A 164-amino-acid polypeptide reads, in one-letter code: Phosphopantetheine adenylyltransferase (164 aa).

Ser9 contributes to the substrate binding site. Residues Ser9–Phe10 and His17 each bind ATP. Residues Lys41, Leu74, and Arg88 each coordinate substrate. Residues Gly89–Arg91, Glu99, and Tyr124–Thr130 contribute to the ATP site.

It belongs to the bacterial CoaD family. In terms of assembly, homohexamer. Mg(2+) is required as a cofactor.

It localises to the cytoplasm. The catalysed reaction is (R)-4'-phosphopantetheine + ATP + H(+) = 3'-dephospho-CoA + diphosphate. It functions in the pathway cofactor biosynthesis; coenzyme A biosynthesis; CoA from (R)-pantothenate: step 4/5. Its function is as follows. Reversibly transfers an adenylyl group from ATP to 4'-phosphopantetheine, yielding dephospho-CoA (dPCoA) and pyrophosphate. This chain is Phosphopantetheine adenylyltransferase, found in Chromobacterium violaceum (strain ATCC 12472 / DSM 30191 / JCM 1249 / CCUG 213 / NBRC 12614 / NCIMB 9131 / NCTC 9757 / MK).